A 230-amino-acid chain; its full sequence is Orotidine 5'-phosphate decarboxylase (230 aa).

Residues Asp10, Lys32, 59–68 (DLKYHDIPNT), Thr119, Arg180, Gln189, Gly209, and Arg210 each bind substrate. Lys61 (proton donor) is an active-site residue.

Belongs to the OMP decarboxylase family. Type 1 subfamily. Homodimer.

The catalysed reaction is orotidine 5'-phosphate + H(+) = UMP + CO2. The protein operates within pyrimidine metabolism; UMP biosynthesis via de novo pathway; UMP from orotate: step 2/2. Catalyzes the decarboxylation of orotidine 5'-monophosphate (OMP) to uridine 5'-monophosphate (UMP). The sequence is that of Orotidine 5'-phosphate decarboxylase from Actinobacillus pleuropneumoniae serotype 5b (strain L20).